The primary structure comprises 593 residues: Vitamin H transporter (593 aa).

Topologically, residues 1 to 121 (MTISNKSWRS…TTQTKAERRL (121 aa)) are extracellular. 3 positions are modified to phosphoserine: Ser32, Ser33, and Ser43. The helical transmembrane segment at 122 to 142 (LYKLDIIIALYFFMLCWSKSV) threads the bilayer. Residues 143–166 (DLNNYTNAYVSNMKEDLNMKGNDY) are Cytoplasmic-facing. A helical transmembrane segment spans residues 167–187 (VYTSTIANVGAIVFQLPFMYL). At 188-190 (LPR) the chain is on the extracellular side. The chain crosses the membrane as a helical span at residues 191-211 (FPSHIILPVMDLGWTWFTFAC). Residues 212–224 (YRANSLAELRAYR) are Cytoplasmic-facing. The chain crosses the membrane as a helical span at residues 225 to 245 (FILSAFGAAYYPVSQYILGCW). The Extracellular segment spans residues 246–291 (YAPDEINSRVCLFFCGQQLGSVTSGLLQSRIFKSLNGVHGLAGWRW). The helical transmembrane segment at 292–312 (MFLIDAIAISLPTAIIGFFVI) threads the bilayer. Topologically, residues 313–361 (PGVPSKCYSLFLTDEEIRIARARNKRNQIKDGVDKSKLAPLWSRKLWKK) are cytoplasmic. The helical transmembrane segment at 362-382 (VFCTPAFWVLVVFDTCSWNNM) threads the bilayer. The Extracellular segment spans residues 383–408 (TAYSGSYTLWLKSNTKYSIAQVNNLS). Residues 409 to 429 (VIPACLGFAYVIFCAFGADLF) form a helical membrane-spanning segment. The Cytoplasmic portion of the chain corresponds to 430 to 432 (RCK). Residues 433–453 (WIFMVFAAIMNTVSCALLIKW) traverse the membrane as a helical segment. Over 454–460 (DIPSKAK) the chain is Extracellular. The chain crosses the membrane as a helical span at residues 461–481 (WYAFFTTYFSVAASPCLWSFI). The Cytoplasmic segment spans residues 482-492 (NDFLRFDPQVK). A helical transmembrane segment spans residues 493-513 (AITWIAIYSFSQSTYAWIPTL). At 514 to 526 (AWPTVESPRFKTG) the chain is on the extracellular side. The helical transmembrane segment at 527–547 (YTVSLIFGAIYGLWTFVVLFF) threads the bilayer. The Cytoplasmic portion of the chain corresponds to 548 to 593 (YKRNEKKHALGNGIILYDSNKGEELPEFVKKNMEERDGYYYLKRSS).

Belongs to the major facilitator superfamily. Allantoate permease family.

It localises to the cell membrane. Functionally, involved in uptake of biotin with the concomitant entry of protons. In Saccharomyces cerevisiae (strain ATCC 204508 / S288c) (Baker's yeast), this protein is Vitamin H transporter (VHT1).